Here is a 795-residue protein sequence, read N- to C-terminus: Phenylalanine--tRNA ligase beta subunit (795 aa).

Positions 39 to 148 (AGDFSGVVVG…QNAPVGTNLR (110 aa)) constitute a tRNA-binding domain. The 76-residue stretch at 401-476 (PKLNQVSLRR…RIYGYNSIPN (76 aa)) folds into the B5 domain. Positions 454, 460, 463, and 464 each coordinate Mg(2+). The region spanning 701–794 (SRFPANRRDL…LKQRFNAYLR (94 aa)) is the FDX-ACB domain.

It belongs to the phenylalanyl-tRNA synthetase beta subunit family. Type 1 subfamily. In terms of assembly, tetramer of two alpha and two beta subunits. Mg(2+) serves as cofactor.

Its subcellular location is the cytoplasm. It catalyses the reaction tRNA(Phe) + L-phenylalanine + ATP = L-phenylalanyl-tRNA(Phe) + AMP + diphosphate + H(+). The sequence is that of Phenylalanine--tRNA ligase beta subunit (pheT) from Pasteurella multocida (strain Pm70).